Reading from the N-terminus, the 567-residue chain is DNA ligase B (567 aa).

Catalysis depends on Lys132, which acts as the N6-AMP-lysine intermediate.

Belongs to the NAD-dependent DNA ligase family. LigB subfamily.

The enzyme catalyses NAD(+) + (deoxyribonucleotide)n-3'-hydroxyl + 5'-phospho-(deoxyribonucleotide)m = (deoxyribonucleotide)n+m + AMP + beta-nicotinamide D-nucleotide.. Its function is as follows. Catalyzes the formation of phosphodiester linkages between 5'-phosphoryl and 3'-hydroxyl groups in double-stranded DNA using NAD as a coenzyme and as the energy source for the reaction. This is DNA ligase B from Yersinia pseudotuberculosis serotype IB (strain PB1/+).